We begin with the raw amino-acid sequence, 142 residues long: Putative regulator of rDNA transcription protein 16 (142 aa).

A run of 3 helical transmembrane segments spans residues 19-39 (ILLT…VMVA), 84-104 (FLLF…AIFL), and 111-131 (SIFI…GLCH).

It is found in the membrane. Identified in a screen for mutants with decreased levels of rDNA transcription. The polypeptide is Putative regulator of rDNA transcription protein 16 (RRT16) (Saccharomyces cerevisiae (strain ATCC 204508 / S288c) (Baker's yeast)).